The chain runs to 750 residues: Ribosomal RNA large subunit methyltransferase K/L (750 aa).

The THUMP domain occupies 46 to 157 (TAYRLCLWSR…RGEAILSLDL (112 aa)).

It belongs to the methyltransferase superfamily. RlmKL family.

The protein resides in the cytoplasm. It carries out the reaction guanosine(2445) in 23S rRNA + S-adenosyl-L-methionine = N(2)-methylguanosine(2445) in 23S rRNA + S-adenosyl-L-homocysteine + H(+). The enzyme catalyses guanosine(2069) in 23S rRNA + S-adenosyl-L-methionine = N(2)-methylguanosine(2069) in 23S rRNA + S-adenosyl-L-homocysteine + H(+). Specifically methylates the guanine in position 2445 (m2G2445) and the guanine in position 2069 (m7G2069) of 23S rRNA. In Pseudomonas syringae pv. tomato (strain ATCC BAA-871 / DC3000), this protein is Ribosomal RNA large subunit methyltransferase K/L.